The sequence spans 336 residues: D-aspartate oxidase (336 aa).

7 residues coordinate FAD: Glu-34, Lys-35, Thr-41, Ser-42, Gly-304, Val-308, and Ser-309. A Microbody targeting signal motif is present at residues 334–336 (SKL).

It belongs to the DAMOX/DASOX family. In terms of assembly, monomer. FAD serves as cofactor.

The protein localises to the peroxisome matrix. It carries out the reaction D-aspartate + O2 + H2O = oxaloacetate + H2O2 + NH4(+). The enzyme catalyses D-glutamate + O2 + H2O = H2O2 + 2-oxoglutarate + NH4(+). Selectively catalyzes the oxidative deamination of acidic amino acids. Suppresses the level of D-aspartate in the brain, an amino acid that can act as an agonist for glutamate receptors. Protects the organism from the toxicity of D-amino acids. May also function in the intestine. This chain is D-aspartate oxidase, found in Octopus vulgaris (Common octopus).